We begin with the raw amino-acid sequence, 138 residues long: Ribulose bisphosphate carboxylase small subunit (138 aa).

Belongs to the RuBisCO small chain family. As to quaternary structure, heterohexadecamer of 8 large and 8 small subunits.

Its subcellular location is the plastid. It is found in the chloroplast. Functionally, ruBisCO catalyzes two reactions: the carboxylation of D-ribulose 1,5-bisphosphate, the primary event in carbon dioxide fixation, as well as the oxidative fragmentation of the pentose substrate in the photorespiration process. Both reactions occur simultaneously and in competition at the same active site. Although the small subunit is not catalytic it is essential for maximal activity. The protein is Ribulose bisphosphate carboxylase small subunit of Pyropia dentata (Red alga).